A 185-amino-acid chain; its full sequence is Elongation factor P (185 aa).

The protein belongs to the elongation factor P family.

It localises to the cytoplasm. It functions in the pathway protein biosynthesis; polypeptide chain elongation. In terms of biological role, involved in peptide bond synthesis. Stimulates efficient translation and peptide-bond synthesis on native or reconstituted 70S ribosomes in vitro. Probably functions indirectly by altering the affinity of the ribosome for aminoacyl-tRNA, thus increasing their reactivity as acceptors for peptidyl transferase. In Mesomycoplasma hyopneumoniae (strain 232) (Mycoplasma hyopneumoniae), this protein is Elongation factor P.